The following is a 412-amino-acid chain: Glutamate dehydrogenase (412 aa).

Lysine 102 is a catalytic residue.

It belongs to the Glu/Leu/Phe/Val dehydrogenases family. In terms of tissue distribution, in roots, stems, leaves and flowers but not in fruits.

The protein resides in the mitochondrion matrix. The enzyme catalyses L-glutamate + NAD(+) + H2O = 2-oxoglutarate + NH4(+) + NADH + H(+). It catalyses the reaction L-glutamate + NADP(+) + H2O = 2-oxoglutarate + NH4(+) + NADPH + H(+). The sequence is that of Glutamate dehydrogenase (GDH1) from Solanum lycopersicum (Tomato).